Here is a 220-residue protein sequence, read N- to C-terminus: Probable septum site-determining protein MinC (220 aa).

The protein belongs to the MinC family. Interacts with MinD and FtsZ.

In terms of biological role, cell division inhibitor that blocks the formation of polar Z ring septums. Rapidly oscillates between the poles of the cell to destabilize FtsZ filaments that have formed before they mature into polar Z rings. Prevents FtsZ polymerization. This Vibrio atlanticus (strain LGP32) (Vibrio splendidus (strain Mel32)) protein is Probable septum site-determining protein MinC.